Consider the following 243-residue polypeptide: Venom nerve growth factor (243 aa).

A signal peptide spans 1 to 18 (MSMLCYTLIIAFLIGIWA). The propeptide occupies 19 to 125 (APKSEDNVPL…TLNRNIWANN (107 aa)). Basic and acidic residues predominate over residues 47–66 (GLKTSRNTDQHHPTPKKSED). The disordered stretch occupies residues 47–70 (GLKTSRNTDQHHPTPKKSEDQELG). Disulfide bonds link Cys-139–Cys-204, Cys-182–Cys-232, and Cys-192–Cys-234. Asn-148 carries an N-linked (GlcNAc...) asparagine glycan.

Belongs to the NGF-beta family. Homodimer. Expressed by the venom gland.

It is found in the secreted. Functionally, nerve growth factor is important for the development and maintenance of the sympathetic and sensory nervous systems. It stimulates division and differentiation of sympathetic and embryonic sensory neurons as well as basal forebrain cholinergic neurons in the brain. Its relevance in the snake venom is not clear. However, it has been shown to inhibit metalloproteinase-dependent proteolysis of platelet glycoprotein Ib alpha, suggesting a metalloproteinase inhibition to prevent metalloprotease autodigestion and/or protection against prey proteases. Binds a lipid between the two protein chains in the homodimer. The lipid-bound form promotes histamine relase from mouse mast cells, contrary to the lipid-free form. The sequence is that of Venom nerve growth factor from Bungarus multicinctus (Many-banded krait).